Consider the following 145-residue polypeptide: D-aminoacyl-tRNA deacylase (145 aa).

A Gly-cisPro motif, important for rejection of L-amino acids motif is present at residues 137-138 (GP).

It belongs to the DTD family. As to quaternary structure, homodimer.

It localises to the cytoplasm. The catalysed reaction is glycyl-tRNA(Ala) + H2O = tRNA(Ala) + glycine + H(+). The enzyme catalyses a D-aminoacyl-tRNA + H2O = a tRNA + a D-alpha-amino acid + H(+). In terms of biological role, an aminoacyl-tRNA editing enzyme that deacylates mischarged D-aminoacyl-tRNAs. Also deacylates mischarged glycyl-tRNA(Ala), protecting cells against glycine mischarging by AlaRS. Acts via tRNA-based rather than protein-based catalysis; rejects L-amino acids rather than detecting D-amino acids in the active site. By recycling D-aminoacyl-tRNA to D-amino acids and free tRNA molecules, this enzyme counteracts the toxicity associated with the formation of D-aminoacyl-tRNA entities in vivo and helps enforce protein L-homochirality. This chain is D-aminoacyl-tRNA deacylase, found in Lactobacillus acidophilus (strain ATCC 700396 / NCK56 / N2 / NCFM).